A 131-amino-acid chain; its full sequence is NADH dehydrogenase [ubiquinone] 1 alpha subcomplex subunit 6 (131 aa).

Belongs to the complex I LYR family. Mammalian complex I is composed of 45 different subunits.

The protein resides in the mitochondrion inner membrane. Functionally, accessory subunit of the mitochondrial membrane respiratory chain NADH dehydrogenase (Complex I), that is believed to be not involved in catalysis. Required for proper complex I assembly. Complex I functions in the transfer of electrons from NADH to the respiratory chain. The immediate electron acceptor for the enzyme is believed to be ubiquinone. The sequence is that of NADH dehydrogenase [ubiquinone] 1 alpha subcomplex subunit 6 from Mus musculus (Mouse).